A 126-amino-acid polypeptide reads, in one-letter code: Adrenocorticotropic hormone receptor (126 aa).

A helical membrane pass occupies residues 1–25 (VLPEEIFFTISIVGVLENLIVLLAV). Residues 26 to 34 (FKNKNLQAP) lie on the Cytoplasmic side of the membrane. The helical transmembrane segment at 35-55 (MYFFICSLAISDMLGSLYKIL) threads the bilayer. Over 56-80 (ENILIILRNMGYLKPRGSFETTADD) the chain is Extracellular. Residues 81–102 (IIDSLFVLSLLGAIFSLSVIAA) form a helical membrane-spanning segment. Over 103–123 (DRYITIFHALRYHSIVTMRRT) the chain is Cytoplasmic. Residues 124-126 (VVV) traverse the membrane as a helical segment.

The protein belongs to the G-protein coupled receptor 1 family. Interacts with MRAP; increasing ligand-sensitivity and generation of cAMP. Interacts with MRAP2; competing with MRAP for binding to MC2R and impairing the binding of corticotropin (ACTH).

Its subcellular location is the cell membrane. Receptor for corticotropin (ACTH). This receptor is mediated by G proteins (G(s)) which activate adenylate cyclase (cAMP). This chain is Adrenocorticotropic hormone receptor (MC2R), found in Papio hamadryas (Hamadryas baboon).